The chain runs to 317 residues: Transaldolase (317 aa).

The Schiff-base intermediate with substrate role is filled by K132.

This sequence belongs to the transaldolase family. Type 1 subfamily. As to quaternary structure, homodimer.

The protein resides in the cytoplasm. The catalysed reaction is D-sedoheptulose 7-phosphate + D-glyceraldehyde 3-phosphate = D-erythrose 4-phosphate + beta-D-fructose 6-phosphate. It participates in carbohydrate degradation; pentose phosphate pathway; D-glyceraldehyde 3-phosphate and beta-D-fructose 6-phosphate from D-ribose 5-phosphate and D-xylulose 5-phosphate (non-oxidative stage): step 2/3. In terms of biological role, transaldolase is important for the balance of metabolites in the pentose-phosphate pathway. This Mannheimia succiniciproducens (strain KCTC 0769BP / MBEL55E) protein is Transaldolase.